Here is a 701-residue protein sequence, read N- to C-terminus: Polyribonucleotide nucleotidyltransferase (701 aa).

Aspartate 487 and aspartate 493 together coordinate Mg(2+). The region spanning 553-612 (PRLYTLRINPDKIRDVIGKGGSVIRALTEETGTSIDIAEDGLITIASVSAEGAEEAKRRI) is the KH domain. The S1 motif domain maps to 622-692 (GKIYEGTVVK…ERGRIRLSIK (71 aa)).

This sequence belongs to the polyribonucleotide nucleotidyltransferase family. Mg(2+) serves as cofactor.

The protein resides in the cytoplasm. It catalyses the reaction RNA(n+1) + phosphate = RNA(n) + a ribonucleoside 5'-diphosphate. In terms of biological role, involved in mRNA degradation. Catalyzes the phosphorolysis of single-stranded polyribonucleotides processively in the 3'- to 5'-direction. The sequence is that of Polyribonucleotide nucleotidyltransferase from Laribacter hongkongensis (strain HLHK9).